A 420-amino-acid chain; its full sequence is UDP-N-acetylglucosamine 1-carboxyvinyltransferase (420 aa).

Position 22–23 (22–23 (KN)) interacts with phosphoenolpyruvate. Arg93 serves as a coordination point for UDP-N-acetyl-alpha-D-glucosamine. The active-site Proton donor is the Cys117. Cys117 is modified (2-(S-cysteinyl)pyruvic acid O-phosphothioketal). Asp307 and Val329 together coordinate UDP-N-acetyl-alpha-D-glucosamine.

This sequence belongs to the EPSP synthase family. MurA subfamily.

The protein resides in the cytoplasm. The catalysed reaction is phosphoenolpyruvate + UDP-N-acetyl-alpha-D-glucosamine = UDP-N-acetyl-3-O-(1-carboxyvinyl)-alpha-D-glucosamine + phosphate. The protein operates within cell wall biogenesis; peptidoglycan biosynthesis. Its function is as follows. Cell wall formation. Adds enolpyruvyl to UDP-N-acetylglucosamine. This chain is UDP-N-acetylglucosamine 1-carboxyvinyltransferase, found in Marinobacter nauticus (strain ATCC 700491 / DSM 11845 / VT8) (Marinobacter aquaeolei).